Here is a 249-residue protein sequence, read N- to C-terminus: Tetrahydromethanopterin S-methyltransferase subunit A (249 aa).

Residues 2-225 (PEKAEPAEGW…YMAGYLSGRT (224 aa)) lie on the Cytoplasmic side of the membrane. H88 contributes to the 5-hydroxybenzimidazolylcob(I)amide binding site. A helical membrane pass occupies residues 226 to 246 (MGLLIGIISGMIFLFLPMVVL). The Extracellular portion of the chain corresponds to 247–249 (GGV).

It belongs to the MtrA family. In terms of assembly, the complex is composed of 8 subunits; MtrA, MtrB, MtrC, MtrD, MtrE, MtrF, MtrG and MtrH. The cofactor is 5-hydroxybenzimidazolylcob(I)amide.

Its subcellular location is the cell membrane. The catalysed reaction is 5-methyl-5,6,7,8-tetrahydromethanopterin + coenzyme M + 2 Na(+)(in) = 5,6,7,8-tetrahydromethanopterin + methyl-coenzyme M + 2 Na(+)(out). It functions in the pathway one-carbon metabolism; methanogenesis from CO(2); methyl-coenzyme M from 5,10-methylene-5,6,7,8-tetrahydromethanopterin: step 2/2. In terms of biological role, part of a complex that catalyzes the formation of methyl-coenzyme M and tetrahydromethanopterin from coenzyme M and methyl-tetrahydromethanopterin. This is an energy-conserving, sodium-ion translocating step. This is Tetrahydromethanopterin S-methyltransferase subunit A from Methanopyrus kandleri (strain AV19 / DSM 6324 / JCM 9639 / NBRC 100938).